The sequence spans 455 residues: Probable glycine dehydrogenase (decarboxylating) subunit 1 (455 aa).

The protein belongs to the GcvP family. N-terminal subunit subfamily. As to quaternary structure, the glycine cleavage system is composed of four proteins: P, T, L and H. In this organism, the P 'protein' is a heterodimer of two subunits.

The catalysed reaction is N(6)-[(R)-lipoyl]-L-lysyl-[glycine-cleavage complex H protein] + glycine + H(+) = N(6)-[(R)-S(8)-aminomethyldihydrolipoyl]-L-lysyl-[glycine-cleavage complex H protein] + CO2. In terms of biological role, the glycine cleavage system catalyzes the degradation of glycine. The P protein binds the alpha-amino group of glycine through its pyridoxal phosphate cofactor; CO(2) is released and the remaining methylamine moiety is then transferred to the lipoamide cofactor of the H protein. This chain is Probable glycine dehydrogenase (decarboxylating) subunit 1, found in Francisella tularensis subsp. novicida (strain U112).